The following is a 480-amino-acid chain: 6-phosphogluconate dehydrogenase, decarboxylating (480 aa).

NADP(+) is bound by residues 11–16, 34–36, 76–78, and asparagine 104; these read GLAVMG, NRS, and IKA. Residues asparagine 104 and 130 to 132 contribute to the substrate site; that span reads SGG. Lysine 184 functions as the Proton acceptor in the catalytic mechanism. Substrate is bound at residue 187 to 188; it reads HN. Residue glutamate 191 is the Proton donor of the active site. 5 residues coordinate substrate: tyrosine 192, lysine 261, arginine 288, arginine 448, and histidine 454.

This sequence belongs to the 6-phosphogluconate dehydrogenase family. Homodimer.

It catalyses the reaction 6-phospho-D-gluconate + NADP(+) = D-ribulose 5-phosphate + CO2 + NADPH. It participates in carbohydrate degradation; pentose phosphate pathway; D-ribulose 5-phosphate from D-glucose 6-phosphate (oxidative stage): step 3/3. Catalyzes the oxidative decarboxylation of 6-phosphogluconate to ribulose 5-phosphate and CO(2), with concomitant reduction of NADP to NADPH. This Chlamydia trachomatis serovar D (strain ATCC VR-885 / DSM 19411 / UW-3/Cx) protein is 6-phosphogluconate dehydrogenase, decarboxylating (gnd).